Here is a 401-residue protein sequence, read N- to C-terminus: Acetate kinase (401 aa).

N7 is a binding site for Mg(2+). Residue K14 participates in ATP binding. R92 contacts substrate. Catalysis depends on D149, which acts as the Proton donor/acceptor. ATP-binding positions include 209–213, 283–285, and 331–335; these read HLGNG, DAR, and GLGEN. E385 contacts Mg(2+).

It belongs to the acetokinase family. Homodimer. Mg(2+) serves as cofactor. Mn(2+) is required as a cofactor.

Its subcellular location is the cytoplasm. It carries out the reaction acetate + ATP = acetyl phosphate + ADP. It participates in metabolic intermediate biosynthesis; acetyl-CoA biosynthesis; acetyl-CoA from acetate: step 1/2. Its function is as follows. Catalyzes the formation of acetyl phosphate from acetate and ATP. Can also catalyze the reverse reaction. This chain is Acetate kinase, found in Helicobacter pylori (strain Shi470).